Here is a 90-residue protein sequence, read N- to C-terminus: YCFQKINRPGESDEGCILDGKLYPFGEISRTENCYRCSCSRDAMRCCTLFHTPVGYNKEKCKVVFNKESCNYDVVQKDDPSKECFVYSRV.

5 disulfides stabilise this stretch: cysteine 2/cysteine 16, cysteine 34/cysteine 70, cysteine 37/cysteine 46, cysteine 39/cysteine 47, and cysteine 61/cysteine 84. Valine 90 bears the Valine amide mark.

This sequence belongs to the beta-microseminoprotein family.

It is found in the secreted. This is Beta-microseminoprotein (MSMB) from Struthio camelus (Common ostrich).